A 296-amino-acid chain; its full sequence is GTPase Era (296 aa).

The region spanning 3-170 (KSGFVTIVGR…KELMFKYIPE (168 aa)) is the Era-type G domain. The segment at 11-18 (GRPNVGKS) is G1. 11–18 (GRPNVGKS) is a GTP binding site. The segment at 37 to 41 (QTTRN) is G2. The segment at 58–61 (DTPG) is G3. GTP contacts are provided by residues 58–62 (DTPGI) and 120–123 (NKID). The tract at residues 120–123 (NKID) is G4. Positions 149–151 (ISA) are G5. One can recognise a KH type-2 domain in the interval 201–278 (LSEEVPHGIA…YIRLWVKVKE (78 aa)).

The protein belongs to the TRAFAC class TrmE-Era-EngA-EngB-Septin-like GTPase superfamily. Era GTPase family. As to quaternary structure, monomer.

It is found in the cytoplasm. The protein localises to the cell membrane. Its function is as follows. An essential GTPase that binds both GDP and GTP, with rapid nucleotide exchange. Plays a role in 16S rRNA processing and 30S ribosomal subunit biogenesis and possibly also in cell cycle regulation and energy metabolism. This chain is GTPase Era, found in Clostridium botulinum (strain ATCC 19397 / Type A).